The following is a 601-amino-acid chain: NADPH--cytochrome P450 reductase (601 aa).

Positions 25 to 169 (IVVFYGSQTG…DFVTWREQFW (145 aa)) constitute a Flavodoxin-like domain. Residues 31–36 (SQTGTG), 83–86 (ATYG), 118–127 (LGDKTYEHYN), and aspartate 153 contribute to the FMN site. The 202-residue stretch at 224–425 (KNPFLAPVTV…ICAVLVEYXT (202 aa)) folds into the FAD-binding FR-type domain. Residues 399 to 402 (RYYS), 417 to 419 (CAV), tyrosine 423, and 427 to 430 (GVAT) each bind FAD. NADP(+) contacts are provided by residues threonine 458, 519–520 (SR), 525–529 (KVYVQ), and aspartate 562. Tryptophan 600 lines the FAD pocket.

The protein belongs to the NADPH--cytochrome P450 reductase family. It in the N-terminal section; belongs to the flavodoxin family. In the C-terminal section; belongs to the flavoprotein pyridine nucleotide cytochrome reductase family. FAD serves as cofactor. FMN is required as a cofactor.

The protein localises to the endoplasmic reticulum membrane. It carries out the reaction 2 oxidized [cytochrome P450] + NADPH = 2 reduced [cytochrome P450] + NADP(+) + H(+). This enzyme is required for electron transfer from NADP to cytochrome P450 in microsomes. It can also provide electron transfer to heme oxygenase and cytochrome B5. In Salmo trutta (Brown trout), this protein is NADPH--cytochrome P450 reductase.